The following is an 887-amino-acid chain: Valine--tRNA ligase (887 aa).

A 'HIGH' region motif is present at residues 48-58; it reads PNVTGVLHVGH. The short motif at 527–531 is the 'KMSKS' region element; sequence KMSKS. Lys-530 contacts ATP. Residues 814–887 adopt a coiled-coil conformation; it reads LAGLVDIEAE…EASDRLKKLS (74 aa).

It belongs to the class-I aminoacyl-tRNA synthetase family. ValS type 1 subfamily. As to quaternary structure, monomer.

The protein resides in the cytoplasm. It catalyses the reaction tRNA(Val) + L-valine + ATP = L-valyl-tRNA(Val) + AMP + diphosphate. In terms of biological role, catalyzes the attachment of valine to tRNA(Val). As ValRS can inadvertently accommodate and process structurally similar amino acids such as threonine, to avoid such errors, it has a 'posttransfer' editing activity that hydrolyzes mischarged Thr-tRNA(Val) in a tRNA-dependent manner. The protein is Valine--tRNA ligase of Desulfotalea psychrophila (strain LSv54 / DSM 12343).